A 48-amino-acid chain; its full sequence is DCASGPCCRDCKFLEEFTICNMARGDDMNDYCNGKTCDCPRNPHKWPA.

The 47-residue stretch at 1–47 folds into the Disintegrin domain; it reads DCASGPCCRDCKFLEEFTICNMARGDDMNDYCNGKTCDCPRNPHKWP. Disulfide bonds link C2-C11, C7-C32, C8-C37, and C20-C39. The Cell attachment site signature appears at 24-26; it reads RGD.

The protein belongs to the venom metalloproteinase (M12B) family. P-II subfamily. P-IIa sub-subfamily. As to quaternary structure, monomer (disintegrin). As to expression, expressed by the venom gland.

The protein resides in the secreted. Its function is as follows. Inhibits ADP-induced human platelet aggregation. The protein is Disintegrin leucogastin-A of Echis leucogaster (Roman's saw-scaled viper).